Consider the following 107-residue polypeptide: UPF0145 protein ESA_02470 (107 aa).

Belongs to the UPF0145 family.

The sequence is that of UPF0145 protein ESA_02470 from Cronobacter sakazakii (strain ATCC BAA-894) (Enterobacter sakazakii).